A 591-amino-acid polypeptide reads, in one-letter code: MAERTHACGKVTVEAVGQTVQLKGWVQKRRDLGGLIFIDLRDRTGIVQVVFNPETSKEALEVAETIRSEYVLHVEGTVVERGEGAINDNMATGRIEVQATKVNVLNAAKTTPIIIADDTDASEDVRLKYRYLDLRRPVMFNTFKMRHDVTKTIRNFLDTEEFLEVETPILTKSTPEGARDYLVPSRVHDGEFYALPQSPQLFKQLLMVGGFERYYQVARCFRDEDLRADRQPEFTQIDIEASFLTQDEILDMMERMMTKVMKDAKGVEVSAPFPRMKYADAMARYGSDKPDTCFEMELTDLSEFAADCGFKVFTSAVESGGQVKAINAKGAASKYSRKDIDALTEFVKVYGAKGLAWLKVEEDGLKGPIAKFFGEEDANVLMSTLEATAGDLLLFVADKKSVVADSLGALRLRLGKELELIDESKFNFLWVTDWPLLEYDEDADRYFAAHHPFTMPFREDVELLETAPEKARAQAYDLVLNGYELGGGSLRIYERDVQEKMFKALGFSQEEAQEQFGFLLEAFEYGTPPHGGIALGLDRLVMLLAGRTNLRDTIAFPKTASASCLLTEAPSPVAEAQLEELNLKLSLKEEK.

Glu176 contributes to the L-aspartate binding site. An aspartate region spans residues 200–203 (QLFK). Arg222 contributes to the L-aspartate binding site. ATP-binding positions include 222 to 224 (RDE) and Gln231. His450 contacts L-aspartate. Glu484 lines the ATP pocket. L-aspartate is bound at residue Arg491. 536 to 539 (GLDR) is a binding site for ATP.

Belongs to the class-II aminoacyl-tRNA synthetase family. Type 1 subfamily. Homodimer.

Its subcellular location is the cytoplasm. The catalysed reaction is tRNA(Asx) + L-aspartate + ATP = L-aspartyl-tRNA(Asx) + AMP + diphosphate. Aspartyl-tRNA synthetase with relaxed tRNA specificity since it is able to aspartylate not only its cognate tRNA(Asp) but also tRNA(Asn). Reaction proceeds in two steps: L-aspartate is first activated by ATP to form Asp-AMP and then transferred to the acceptor end of tRNA(Asp/Asn). The protein is Aspartate--tRNA(Asp/Asn) ligase of Bacillus cereus (strain ATCC 14579 / DSM 31 / CCUG 7414 / JCM 2152 / NBRC 15305 / NCIMB 9373 / NCTC 2599 / NRRL B-3711).